We begin with the raw amino-acid sequence, 914 residues long: WAG22 antigen (914 aa).

Residues 1-93 (MSFVIAVPET…GGAYAAAEAA (93 aa)) form the PE domain. Disordered regions lie at residues 412-431 (GGSGGAGGSGGPAGTAAGGA) and 895-914 (AGAGGAGGLVLGRDGQHGLT). Residues 895-904 (AGAGGAGGLV) show a composition bias toward gly residues.

This sequence belongs to the mycobacterial PE family. PGRS subfamily.

The chain is WAG22 antigen (wag22) from Mycobacterium bovis (strain ATCC BAA-935 / AF2122/97).